We begin with the raw amino-acid sequence, 205 residues long: Purine catabolism protein PucB (205 aa).

The protein operates within purine metabolism; hypoxanthine degradation. Required for xanthine dehydrogenase activity. Could be involved in formation of the molybdenum cofactor required by xanthine dehydrogenase. The protein is Purine catabolism protein PucB (pucB) of Bacillus subtilis (strain 168).